We begin with the raw amino-acid sequence, 389 residues long: GDSL esterase/lipase At1g28570 (389 aa).

Positions 1 to 25 (MATLFMKLVSFFLILSTFCLTTVNS) are cleaved as a signal peptide. Residue serine 41 is the Nucleophile of the active site. N-linked (GlcNAc...) asparagine glycosylation is found at asparagine 137 and asparagine 319. Residues aspartate 344 and histidine 347 contribute to the active site.

Belongs to the 'GDSL' lipolytic enzyme family.

It localises to the secreted. The polypeptide is GDSL esterase/lipase At1g28570 (Arabidopsis thaliana (Mouse-ear cress)).